The following is a 157-amino-acid chain: Parasitophorous vacuole membrane protein S16 (157 aa).

The first 25 residues, 1–25, serve as a signal peptide directing secretion; sequence MNIRKFIPSLALMLIFFAFANLVLS. The Extracellular segment spans residues 26–105; that stretch reads DANDKAKKPA…DKKTTVNRNL (80 aa). The tract at residues 30 to 74 is disordered; the sequence is KAKKPAGKGSPSTLQTPGSSSGASLHAVGPNQGGLSQGLSGKDSA. Residues 39 to 52 show a composition bias toward polar residues; the sequence is SPSTLQTPGSSSGA. Residues 106-126 traverse the membrane as a helical segment; that stretch reads IISTAVTNMIMLIILSGIVGF. Topologically, residues 127 to 157 are cytoplasmic; sequence KVKKTKNADDDKGDKDKDKDNTDEGDEGDDS. Positions 130 to 157 are disordered; the sequence is KTKNADDDKGDKDKDKDNTDEGDEGDDS. The span at 132 to 148 shows a compositional bias: basic and acidic residues; the sequence is KNADDDKGDKDKDKDNT.

It is found in the parasitophorous vacuole membrane. Its subcellular location is the vacuole. Its function is as follows. Involved in male gametogenesis. Required for exflagellation of male gametocytes. May play a role in parasite transmission in the mosquito. Binds to the mosquito vector midgut. The sequence is that of Parasitophorous vacuole membrane protein S16 from Plasmodium falciparum (isolate 3D7).